Here is a 425-residue protein sequence, read N- to C-terminus: Multifunctional CCA protein (425 aa).

ATP is bound by residues Gly-8 and Arg-11. Residues Gly-8 and Arg-11 each contribute to the CTP site. Mg(2+) is bound by residues Asp-21 and Asp-23. Residues Arg-91, Arg-141, and Arg-144 each contribute to the ATP site. The CTP site is built by Arg-91, Arg-141, and Arg-144. An HD domain is found at 230–331 (TGVHLMMVLD…VRLLERCDAI (102 aa)).

It belongs to the tRNA nucleotidyltransferase/poly(A) polymerase family. Bacterial CCA-adding enzyme type 1 subfamily. Monomer. Can also form homodimers and oligomers. The cofactor is Mg(2+). Ni(2+) is required as a cofactor.

The enzyme catalyses a tRNA precursor + 2 CTP + ATP = a tRNA with a 3' CCA end + 3 diphosphate. It catalyses the reaction a tRNA with a 3' CCA end + 2 CTP + ATP = a tRNA with a 3' CCACCA end + 3 diphosphate. In terms of biological role, catalyzes the addition and repair of the essential 3'-terminal CCA sequence in tRNAs without using a nucleic acid template. Adds these three nucleotides in the order of C, C, and A to the tRNA nucleotide-73, using CTP and ATP as substrates and producing inorganic pyrophosphate. tRNA 3'-terminal CCA addition is required both for tRNA processing and repair. Also involved in tRNA surveillance by mediating tandem CCA addition to generate a CCACCA at the 3' terminus of unstable tRNAs. While stable tRNAs receive only 3'-terminal CCA, unstable tRNAs are marked with CCACCA and rapidly degraded. This Acidovorax sp. (strain JS42) protein is Multifunctional CCA protein.